Reading from the N-terminus, the 173-residue chain is Alpha-crystallin A chain (173 aa).

Met1 is modified (N-acetylmethionine). The region spanning 53–164 (NFLDSSNSGM…GDRSIPVTRD (112 aa)) is the sHSP domain. Positions 101, 103, and 108 each coordinate Zn(2+). Cys132 and Cys143 are oxidised to a cystine. The interval 143–173 (CGPKSGGSESGRGDRSIPVTRDDKTNSTPSS) is disordered. The segment covering 153 to 167 (GRGDRSIPVTRDDKT) has biased composition (basic and acidic residues).

The protein belongs to the small heat shock protein (HSP20) family. Heteropolymer composed of three CRYAA and one CRYAB subunits. Inter-subunit bridging via zinc ions enhances stability, which is crucial as there is no protein turn over in the lens. Zinc coordination is achieved at least by His-101, Glu-103 and His-108. His-101 and Glu-103 come from the same molecule within the oligomer, while His-108 residue is provided by another molecule. Can also form homodimers and homotetramers (dimers of dimers) which serve as the building blocks of homooligomers. Part of a complex required for lens intermediate filament formation composed of BFSP1, BFSP2 and CRYAA.

It is found in the cytoplasm. The protein resides in the nucleus. Contributes to the transparency and refractive index of the lens. May act as a chaperone, preventing aggregation of various proteins under a wide range of stress conditions. This is Alpha-crystallin A chain (cryaa) from Psalidodon fasciatus (Banded astyanax).